Here is a 135-residue protein sequence, read N- to C-terminus: Antennal-specific protein OS-C (135 aa).

A signal peptide spans 1–27 (MGFHMGRQLLLSGFLLVMLQMVTQTQA). The tract at residues 43-84 (VIKREGDDDGDDDDSSSEETVEDSEESRRRRREVNTDNTPSA) is disordered. The span at 49–67 (DDDGDDDDSSSEETVEDSE) shows a compositional bias: acidic residues.

As to expression, antenna. In the third antennal segment. Expressed in sencilla coeloconica.

The sequence is that of Antennal-specific protein OS-C (Os-C) from Drosophila melanogaster (Fruit fly).